The primary structure comprises 307 residues: MDDKMNYYPISREEWHGFYHDGKAPLTEAELDNIKSVNDQISLKDVQEIYVPLTHLIHLYMKEFESLTLSKGLFLHEYVSVPPFIIGIAGSVAVGKSTTARLLQRILARTFKRRNVQLITTDGFLYPNKVLEEQGIMDRKGFPESYDMEKLINFLNEVKSGKDEIKAPVYSHSVYDVIEGEYELIQQPDILIVEGINTLQLPANQQIYVSDFFDFSIFVDADPALIEKWYLERFGALLDTAFLDPNNYYYQYAIGKREDAFAMARNVWKTVNLPNLEEYILPTRGRADIILHKTENHLIDQIYLRKY.

90–97 (GSVAVGKS) serves as a coordination point for ATP.

It belongs to the prokaryotic pantothenate kinase family.

The protein resides in the cytoplasm. The enzyme catalyses (R)-pantothenate + ATP = (R)-4'-phosphopantothenate + ADP + H(+). It participates in cofactor biosynthesis; coenzyme A biosynthesis; CoA from (R)-pantothenate: step 1/5. The protein is Pantothenate kinase of Enterococcus faecalis (strain ATCC 700802 / V583).